A 227-amino-acid chain; its full sequence is Cytochrome c oxidase subunit 2 (227 aa).

The Mitochondrial intermembrane portion of the chain corresponds to Met-1–Ser-14. A helical transmembrane segment spans residues Pro-15–Met-45. Topologically, residues Leu-46–Gln-59 are mitochondrial matrix. Residues Glu-60 to Met-87 traverse the membrane as a helical segment. The Mitochondrial intermembrane segment spans residues Asp-88–Ile-227. 6 residues coordinate Cu cation: His-161, Cys-196, Glu-198, Cys-200, His-204, and Met-207. Glu-198 contributes to the Mg(2+) binding site. Tyr-218 carries the phosphotyrosine modification.

The protein belongs to the cytochrome c oxidase subunit 2 family. In terms of assembly, component of the cytochrome c oxidase (complex IV, CIV), a multisubunit enzyme composed of 14 subunits. The complex is composed of a catalytic core of 3 subunits MT-CO1, MT-CO2 and MT-CO3, encoded in the mitochondrial DNA, and 11 supernumerary subunits COX4I, COX5A, COX5B, COX6A, COX6B, COX6C, COX7A, COX7B, COX7C, COX8 and NDUFA4, which are encoded in the nuclear genome. The complex exists as a monomer or a dimer and forms supercomplexes (SCs) in the inner mitochondrial membrane with NADH-ubiquinone oxidoreductase (complex I, CI) and ubiquinol-cytochrome c oxidoreductase (cytochrome b-c1 complex, complex III, CIII), resulting in different assemblies (supercomplex SCI(1)III(2)IV(1) and megacomplex MCI(2)III(2)IV(2)). Found in a complex with TMEM177, COA6, COX18, COX20, SCO1 and SCO2. Interacts with TMEM177 in a COX20-dependent manner. Interacts with COX20. Interacts with COX16. Requires Cu cation as cofactor.

Its subcellular location is the mitochondrion inner membrane. It carries out the reaction 4 Fe(II)-[cytochrome c] + O2 + 8 H(+)(in) = 4 Fe(III)-[cytochrome c] + 2 H2O + 4 H(+)(out). Functionally, component of the cytochrome c oxidase, the last enzyme in the mitochondrial electron transport chain which drives oxidative phosphorylation. The respiratory chain contains 3 multisubunit complexes succinate dehydrogenase (complex II, CII), ubiquinol-cytochrome c oxidoreductase (cytochrome b-c1 complex, complex III, CIII) and cytochrome c oxidase (complex IV, CIV), that cooperate to transfer electrons derived from NADH and succinate to molecular oxygen, creating an electrochemical gradient over the inner membrane that drives transmembrane transport and the ATP synthase. Cytochrome c oxidase is the component of the respiratory chain that catalyzes the reduction of oxygen to water. Electrons originating from reduced cytochrome c in the intermembrane space (IMS) are transferred via the dinuclear copper A center (CU(A)) of subunit 2 and heme A of subunit 1 to the active site in subunit 1, a binuclear center (BNC) formed by heme A3 and copper B (CU(B)). The BNC reduces molecular oxygen to 2 water molecules using 4 electrons from cytochrome c in the IMS and 4 protons from the mitochondrial matrix. The sequence is that of Cytochrome c oxidase subunit 2 (MT-CO2) from Dacnomys millardi (Millard's rat).